Reading from the N-terminus, the 694-residue chain is MQTHHDLPVSGVSAGEIASEGYDLDALLNQHFAGRVVRKDLTKQLKEGANVPVYVLEYLLGMYCASDDDDVVEQGLQNVKRILADNYVRPDEAEKVKSLIRERGSYKIIDKVSVKLNQKKDVYEAQLSNLGIKDALVPSQMVKDNEKLLTGGIWCMITVNYFFEEGQKTSPFSLMTLKPIQMPNMDMEEVFDARKHFNRDQWIDVLLRSVGMEPANIEQRTKWHLITRMIPFVENNYNVCELGPRGTGKSHVYKECSPNSLLVSGGQTTVANLFYNMASRQIGLVGMWDVVAFDEVAGITFKDKDGVQIMKDYMASGSFSRGRDSIEGKASMVFVGNINQSVETLVKTSHLLAPFPAAMIDTAFFDRFHAYIPGWEIPKMRPEFFTNRYGLITDYLAEYMREMRKRSFSDAIDKFFKLGNNLNQRDVIAVRRTVSGLLKLMHPDGAYSKEDVRVCLTYAMEVRRRVKEQLKKLGGLEFFDVNFSYIDNETLEEFFVSVPEQGGSELIPAGMPKPGVVHLVTQAESGMTGLYRFETQMTAGNGKHSVSGLGSNTSAKEAIRVGFDYFKGNLNRVSAAAKFSDHEYHLHVVELHNTGPSTATSLAALIALCSILLAKPVQEQMVVLGSMTLGGVINPVQDLAASLQLAFDSGAKRVLLPMSSAMDIPTVPAELFTKFQVSFYSDPVDAVYKALGVN.

The protein belongs to the BrxL family.

In terms of biological role, BREX systems (bacteriophage exclusion) provide immunity against bacteriophage. Part of a type 1 BREX system which protects against dsDNA phage. This system allows phage adsorption but prevents phage DNA replication, without degradation of the phage DNA. Methylation of bacterial DNA by PglX guides self/non-self discrimination. When the brxA-brxB-brxC-pglX-pglZ-brxL genes are transformed into a susceptible E.coli strain (BW25113) they confer very high resistance to infection by bacteriophage VR7 and VpaE1, about 100-fold protection against lambda, T5 and T7 and no protection against RNA phage Qbeta, ssDNA phage M13 or dSDNA phage T4 and VR5. Glycosylated phage DNA is not susceptible to BREX. The BREX system does not confer resistance to lysogenic lambda phage, i.e. prophage that are integrated into the chromosomal DNA and then induced to form phage. Expression of this protein alone is toxic. In Escherichia coli O9:H4 (strain HS), this protein is Lon-like protease BrxL.